The chain runs to 830 residues: Periplasmic nitrate reductase (830 aa).

Positions 1 to 31 form a signal peptide, tat-type signal; it reads MKLSRRDFMKANAAVAAAAAAGMTIPTVAKA. The 57-residue stretch at 39 to 95 folds into the 4Fe-4S Mo/W bis-MGD-type domain; it reads IKWDKAPCRFCGTGCGVLVGTQNGRIVASQGDPDSPVNRGLNCIKGYFLPKIMYGKD. Residues Cys46, Cys49, Cys53, and Cys81 each coordinate [4Fe-4S] cluster. Mo-bis(molybdopterin guanine dinucleotide)-binding positions include Lys83, Gln150, Asn175, Cys179, 212 to 219, 243 to 247, 262 to 264, Met372, Gln376, Asn482, 508 to 509, Lys531, Asp558, and 718 to 727; these read WGSNMAEM, STYEH, QTD, SD, and TGRVLEHWHT. Phe794 serves as a coordination point for substrate. Mo-bis(molybdopterin guanine dinucleotide)-binding residues include Asn802 and Lys819.

It belongs to the prokaryotic molybdopterin-containing oxidoreductase family. NasA/NapA/NarB subfamily. In terms of assembly, component of the periplasmic nitrate reductase NapAB complex composed of NapA and NapB. Requires [4Fe-4S] cluster as cofactor. Mo-bis(molybdopterin guanine dinucleotide) is required as a cofactor. Predicted to be exported by the Tat system. The position of the signal peptide cleavage has not been experimentally proven.

The protein localises to the periplasm. It carries out the reaction 2 Fe(II)-[cytochrome] + nitrate + 2 H(+) = 2 Fe(III)-[cytochrome] + nitrite + H2O. Its function is as follows. Catalytic subunit of the periplasmic nitrate reductase complex NapAB. Receives electrons from NapB and catalyzes the reduction of nitrate to nitrite. This is Periplasmic nitrate reductase from Yersinia pestis bv. Antiqua (strain Antiqua).